A 284-amino-acid polypeptide reads, in one-letter code: NAD kinase (284 aa).

The Proton acceptor role is filled by D70. NAD(+) is bound by residues 70–71 (DG), 139–140 (NE), K167, D169, L177, 180–185 (TAYNLS), and Q236.

This sequence belongs to the NAD kinase family. A divalent metal cation is required as a cofactor.

The protein resides in the cytoplasm. The catalysed reaction is NAD(+) + ATP = ADP + NADP(+) + H(+). Involved in the regulation of the intracellular balance of NAD and NADP, and is a key enzyme in the biosynthesis of NADP. Catalyzes specifically the phosphorylation on 2'-hydroxyl of the adenosine moiety of NAD to yield NADP. In Helicobacter pylori (strain P12), this protein is NAD kinase.